The chain runs to 167 residues: Mediator of RNA polymerase II transcription subunit 10 (167 aa).

Over residues 141-158 (TGGRTVGGEGEGAGQGEG) the composition is skewed to gly residues. The disordered stretch occupies residues 141 to 167 (TGGRTVGGEGEGAGQGEGGEGRGEGGN).

Belongs to the Mediator complex subunit 10 family. In terms of assembly, component of the Mediator complex.

It localises to the nucleus. Functionally, component of the Mediator complex, a coactivator involved in the regulated transcription of nearly all RNA polymerase II-dependent genes. Mediator functions as a bridge to convey information from gene-specific regulatory proteins to the basal RNA polymerase II transcription machinery. Mediator is recruited to promoters by direct interactions with regulatory proteins and serves as a scaffold for the assembly of a functional preinitiation complex with RNA polymerase II and the general transcription factors. This is Mediator of RNA polymerase II transcription subunit 10 (NUT2) from Chaetomium globosum (strain ATCC 6205 / CBS 148.51 / DSM 1962 / NBRC 6347 / NRRL 1970) (Soil fungus).